The sequence spans 312 residues: Translation initiation factor IF3-2, chloroplastic (312 aa).

A chloroplast-targeting transit peptide spans 1 to 55 (MAGITSSTVGFNAVFTGITKTVSSHSLFSVDSKLCSLRLSKTELSFTNLTPSPRR). The segment covering 253–263 (EMIRKPQEPPT) has biased composition (basic and acidic residues). Positions 253–312 (EMIRKPQEPPTRKKKKTAENEASASAAEITAEPEPEPEPEPEPEPEPEPEPEPEPLQIDS) are disordered. Over residues 272–282 (NEASASAAEIT) the composition is skewed to low complexity. Acidic residues predominate over residues 283–305 (AEPEPEPEPEPEPEPEPEPEPEP).

It belongs to the IF-3 family. In terms of assembly, monomer. In terms of tissue distribution, highly expressed in young, newly emerged leaves.

The protein resides in the plastid. The protein localises to the chloroplast. In terms of biological role, chloroplast translation initiation factor that is essential for the coordination of leaf and chloroplast development. IF-3 binds to the 30S ribosomal subunit and shifts the equilibrium between 70S ribosomes and their 50S and 30S subunits in favor of the free subunits, thus enhancing the availability of 30S subunits on which protein synthesis initiation begins. The polypeptide is Translation initiation factor IF3-2, chloroplastic (Arabidopsis thaliana (Mouse-ear cress)).